Here is a 139-residue protein sequence, read N- to C-terminus: Stress-related protein 1 (139 aa).

The segment covering M1–T12 has biased composition (polar residues). The tract at residues M1–P86 is disordered. 2 stretches are compositionally biased toward low complexity: residues A14 to V53 and S60 to R74. A Phosphoserine modification is found at S60.

In terms of tissue distribution, embryo.

Functionally, involved in drought, heat, cold, and/or salt tolerance. In Zea mays (Maize), this protein is Stress-related protein 1 (SRP1).